A 269-amino-acid chain; its full sequence is Putative hydro-lyase Aave_3512 (269 aa).

Belongs to the D-glutamate cyclase family.

The polypeptide is Putative hydro-lyase Aave_3512 (Paracidovorax citrulli (strain AAC00-1) (Acidovorax citrulli)).